A 428-amino-acid polypeptide reads, in one-letter code: Adenylosuccinate synthetase (428 aa).

GTP contacts are provided by residues glycine 12–lysine 18 and glycine 40–threonine 42. The active-site Proton acceptor is aspartate 13. Residues aspartate 13 and glycine 40 each contribute to the Mg(2+) site. IMP is bound by residues aspartate 13–lysine 16, asparagine 38–histidine 41, threonine 130, arginine 144, glutamine 225, threonine 240, and arginine 304. Histidine 41 (proton donor) is an active-site residue. Residue valine 300–arginine 306 participates in substrate binding. GTP contacts are provided by residues arginine 306, lysine 332–aspartate 334, and serine 414–glycine 416.

This sequence belongs to the adenylosuccinate synthetase family. Homodimer. It depends on Mg(2+) as a cofactor.

It is found in the cytoplasm. The enzyme catalyses IMP + L-aspartate + GTP = N(6)-(1,2-dicarboxyethyl)-AMP + GDP + phosphate + 2 H(+). It participates in purine metabolism; AMP biosynthesis via de novo pathway; AMP from IMP: step 1/2. Plays an important role in the de novo pathway of purine nucleotide biosynthesis. Catalyzes the first committed step in the biosynthesis of AMP from IMP. The polypeptide is Adenylosuccinate synthetase (Clostridium botulinum (strain Loch Maree / Type A3)).